The primary structure comprises 118 residues: Holo-[acyl-carrier-protein] synthase (118 aa).

Mg(2+) is bound by residues Asp8 and Glu60.

It belongs to the P-Pant transferase superfamily. AcpS family. Mg(2+) is required as a cofactor.

Its subcellular location is the cytoplasm. It catalyses the reaction apo-[ACP] + CoA = holo-[ACP] + adenosine 3',5'-bisphosphate + H(+). In terms of biological role, transfers the 4'-phosphopantetheine moiety from coenzyme A to a Ser of acyl-carrier-protein. This chain is Holo-[acyl-carrier-protein] synthase, found in Wolbachia sp. subsp. Drosophila simulans (strain wRi).